We begin with the raw amino-acid sequence, 469 residues long: 3-isopropylmalate dehydratase large subunit (469 aa).

The [4Fe-4S] cluster site is built by C349, C410, and C413.

The protein belongs to the aconitase/IPM isomerase family. LeuC type 1 subfamily. As to quaternary structure, heterodimer of LeuC and LeuD. [4Fe-4S] cluster serves as cofactor.

It carries out the reaction (2R,3S)-3-isopropylmalate = (2S)-2-isopropylmalate. The protein operates within amino-acid biosynthesis; L-leucine biosynthesis; L-leucine from 3-methyl-2-oxobutanoate: step 2/4. Catalyzes the isomerization between 2-isopropylmalate and 3-isopropylmalate, via the formation of 2-isopropylmaleate. This is 3-isopropylmalate dehydratase large subunit from Neisseria gonorrhoeae (strain NCCP11945).